The chain runs to 1071 residues: ATP-dependent helicase/deoxyribonuclease subunit B (1071 aa).

The protein belongs to the helicase family. AddB/RexB type 2 subfamily. Heterodimer of AddA and RexB. Requires Mg(2+) as cofactor.

Its function is as follows. The heterodimer acts as both an ATP-dependent DNA helicase and an ATP-dependent, dual-direction single-stranded exonuclease. Recognizes the chi site generating a DNA molecule suitable for the initiation of homologous recombination. This subunit has 5' -&gt; 3' nuclease activity but not helicase activity. This is ATP-dependent helicase/deoxyribonuclease subunit B from Streptococcus pyogenes serotype M49 (strain NZ131).